The primary structure comprises 410 residues: Peptidase T (410 aa).

Histidine 78 serves as a coordination point for Zn(2+). Aspartate 80 is a catalytic residue. Aspartate 139 contributes to the Zn(2+) binding site. Glutamate 173 acts as the Proton acceptor in catalysis. Residues glutamate 174, aspartate 196, and histidine 378 each contribute to the Zn(2+) site.

This sequence belongs to the peptidase M20B family. The cofactor is Zn(2+).

Its subcellular location is the cytoplasm. It catalyses the reaction Release of the N-terminal residue from a tripeptide.. Cleaves the N-terminal amino acid of tripeptides. The polypeptide is Peptidase T (Shewanella woodyi (strain ATCC 51908 / MS32)).